The sequence spans 513 residues: ATP synthase subunit alpha (513 aa).

Residue 169–176 coordinates ATP; that stretch reads GDRQTGKT.

The protein belongs to the ATPase alpha/beta chains family. In terms of assembly, F-type ATPases have 2 components, CF(1) - the catalytic core - and CF(0) - the membrane proton channel. CF(1) has five subunits: alpha(3), beta(3), gamma(1), delta(1), epsilon(1). CF(0) has three main subunits: a(1), b(2) and c(9-12). The alpha and beta chains form an alternating ring which encloses part of the gamma chain. CF(1) is attached to CF(0) by a central stalk formed by the gamma and epsilon chains, while a peripheral stalk is formed by the delta and b chains.

The protein localises to the cell inner membrane. The catalysed reaction is ATP + H2O + 4 H(+)(in) = ADP + phosphate + 5 H(+)(out). Its function is as follows. Produces ATP from ADP in the presence of a proton gradient across the membrane. The alpha chain is a regulatory subunit. The sequence is that of ATP synthase subunit alpha from Citrobacter koseri (strain ATCC BAA-895 / CDC 4225-83 / SGSC4696).